The sequence spans 307 residues: Cyclooctat-9-en-7-ol synthase (307 aa).

The Mg(2+) site is built by D110, N220, S224, and E228. A DDXXD motif; degenerate motif is present at residues 110–113 (DDMD). Residues 220 to 228 (NDFYSYDRE) carry the NSE/DTE motif motif.

This sequence belongs to the terpene synthase family. As to quaternary structure, homodimer. The cofactor is Mg(2+).

The catalysed reaction is geranylgeranyl diphosphate + H2O = cyclooctat-9-en-7-ol + diphosphate. Catalyzes the cyclization of the linear isoprenoid intermediate geranylgeranyl diphosphate to tricycclic cyclooctat-9-en-7-ol in the cyclooctatin biosynthesis pathway. Cyclooctatin is a potent inhibitor of lysophospholipase. This chain is Cyclooctat-9-en-7-ol synthase, found in Streptomyces melanosporofaciens.